The primary structure comprises 241 residues: Uridylate kinase (241 aa).

15-18 (KLSG) contacts ATP. The interval 23-28 (GTEGFG) is involved in allosteric activation by GTP. Residue Gly-57 coordinates UMP. 2 residues coordinate ATP: Gly-58 and Arg-62. UMP contacts are provided by residues Asp-77 and 138-145 (TGNPFFTT). ATP-binding residues include Thr-165, Phe-171, and Asp-174.

The protein belongs to the UMP kinase family. In terms of assembly, homohexamer.

It localises to the cytoplasm. The enzyme catalyses UMP + ATP = UDP + ADP. It functions in the pathway pyrimidine metabolism; CTP biosynthesis via de novo pathway; UDP from UMP (UMPK route): step 1/1. Allosterically activated by GTP. Inhibited by UTP. In terms of biological role, catalyzes the reversible phosphorylation of UMP to UDP. This chain is Uridylate kinase, found in Salmonella choleraesuis (strain SC-B67).